The following is a 66-amino-acid chain: Large ribosomal subunit protein bL35 (66 aa).

It belongs to the bacterial ribosomal protein bL35 family.

The polypeptide is Large ribosomal subunit protein bL35 (Synechococcus sp. (strain ATCC 27144 / PCC 6301 / SAUG 1402/1) (Anacystis nidulans)).